The following is a 513-amino-acid chain: 2,3-bisphosphoglycerate-independent phosphoglycerate mutase (513 aa).

2 residues coordinate Mn(2+): D14 and S64. S64 acts as the Phosphoserine intermediate in catalysis. Substrate contacts are provided by residues H125, 155–156, R187, R193, 259–262, and K333; these read RD and RADR. Residues D400, H404, D441, H442, and H460 each contribute to the Mn(2+) site.

It belongs to the BPG-independent phosphoglycerate mutase family. Monomer. Mn(2+) serves as cofactor.

The catalysed reaction is (2R)-2-phosphoglycerate = (2R)-3-phosphoglycerate. The protein operates within carbohydrate degradation; glycolysis; pyruvate from D-glyceraldehyde 3-phosphate: step 3/5. Catalyzes the interconversion of 2-phosphoglycerate and 3-phosphoglycerate. The protein is 2,3-bisphosphoglycerate-independent phosphoglycerate mutase of Pseudomonas fluorescens (strain ATCC BAA-477 / NRRL B-23932 / Pf-5).